The chain runs to 556 residues: Phospholipase D (556 aa).

A signal peptide spans 1 to 47; the sequence is MTSDQRPARLPTHKGKLLAPHRLHRLIPVSVALTTVCAALPSSTAYA. In terms of domain architecture, PLD phosphodiesterase 1 spans 210-237; sequence SLSWNHSKLLVVDGKTAITGGINGWKDD. The disordered stretch occupies residues 326 to 360; that stretch reads SDPSSGYHPDLPTAPDTKCTVGLHDNTNADRDYDT. The 28-residue stretch at 484–511 folds into the PLD phosphodiesterase 2 domain; the sequence is KPYALHHKLVSVDDSAFYIGSKNLYPAW.

The protein belongs to the phospholipase D family. In terms of processing, probably has at least 1 disulfide bond.

Its subcellular location is the secreted. The enzyme catalyses a 1,2-diacyl-sn-glycero-3-phosphocholine + H2O = a 1,2-diacyl-sn-glycero-3-phosphate + choline + H(+). With respect to regulation, inhibited by mercaptoethanol and dithiothreitol. Functionally, a reversible phospholipase active on phosphatidylcholine (PC) and phosphatidylethanolamine. Lysophosphatidylcholine and egg sphingomyelin are hydrolyzed about 50 times and 100 times more slowly than PC, respectively. During the transphosphatidylation reaction straight-chain hydroxy compounds, such as triethyleneglycol and triethyleneglycol monomethyl ether, were phosphatidylated in good yield, as were monosaccharides. Disaccharides and sugar alcohol reacted slowly, while N-acetyl-D-galactosamine, D-galactosamine and D-galacturonic acid were not phosphatidylated. In Streptomyces antibioticus, this protein is Phospholipase D.